The chain runs to 432 residues: Enolase (432 aa).

Residue Gln-163 participates in (2R)-2-phosphoglycerate binding. The active-site Proton donor is Glu-205. Mg(2+) contacts are provided by Asp-242, Glu-285, and Asp-312. (2R)-2-phosphoglycerate is bound by residues Lys-337, Arg-366, Ser-367, and Lys-388. Lys-337 functions as the Proton acceptor in the catalytic mechanism.

This sequence belongs to the enolase family. It depends on Mg(2+) as a cofactor.

The protein resides in the cytoplasm. The protein localises to the secreted. It localises to the cell surface. The catalysed reaction is (2R)-2-phosphoglycerate = phosphoenolpyruvate + H2O. The protein operates within carbohydrate degradation; glycolysis; pyruvate from D-glyceraldehyde 3-phosphate: step 4/5. In terms of biological role, catalyzes the reversible conversion of 2-phosphoglycerate (2-PG) into phosphoenolpyruvate (PEP). It is essential for the degradation of carbohydrates via glycolysis. The sequence is that of Enolase from Bifidobacterium adolescentis (strain ATCC 15703 / DSM 20083 / NCTC 11814 / E194a).